The following is a 352-amino-acid chain: MTITTLSRQNIQALTPYQSARKLGGNGTIWLNANEYPTSPEFQLSGKDLNRYPEPQPQRVVQAYANYAGVSTENVLVTRGGDEGIELIIHTFCEPKQDAILFCPPTYGMYAVSAETAGVLSKSVPLTDDFQLNLPEIKNHLNDVKVVFVCSPNNPTGNLLKQSDILDLLQITAGKAIVVVDEAYIEFCPEASVINLLKNYPHLAIIRTLSKAFALAGLRCGFVLANPELIDILSKVIAPYPIPVPSADLAEQALRPANIATVQALTQELLSNRQWLAKALLVLHQVEKVYESEANYLLIKCQNGQAVFKALWEQGIILRDQNKTLHLQNCIRITVGTRNECEKVVEAIKEVK.

Position 211 is an N6-(pyridoxal phosphate)lysine (K211).

This sequence belongs to the class-II pyridoxal-phosphate-dependent aminotransferase family. Histidinol-phosphate aminotransferase subfamily. As to quaternary structure, homodimer. Requires pyridoxal 5'-phosphate as cofactor.

It carries out the reaction L-histidinol phosphate + 2-oxoglutarate = 3-(imidazol-4-yl)-2-oxopropyl phosphate + L-glutamate. It participates in amino-acid biosynthesis; L-histidine biosynthesis; L-histidine from 5-phospho-alpha-D-ribose 1-diphosphate: step 7/9. This Haemophilus influenzae (strain 86-028NP) protein is Histidinol-phosphate aminotransferase 1.